The primary structure comprises 202 residues: Histone chaperone ASF1B (202 aa).

Positions 1 to 156 are interaction with histone H3 and CHAF1B; it reads MAKVSVLNVA…TRFHINWDNN (156 aa). Ser-198 carries the phosphoserine; by TLK2 modification.

This sequence belongs to the ASF1 family. As to quaternary structure, interacts with histone H3 (via C-terminus), including histone H3.1, H3.2 and H3.3, and histone H4; the interaction with H3 is direct. Interacts with the CHAF1A, CHAF1B and RBBP4 subunits of the CAF-1 complex. Interacts with HAT1, NASP and TAF1. Found in a soluble complex with NASP and histones H3 and H4; the interaction with NASP is probably indirect and mediated by H3-H4. Interacts with CDAN1. Found in a cytosolic complex with CDAN1, ASF1A, IPO4 and histones H3.1 and H4. Interacts with CREBBP. Phosphorylated by TLK1 and TLK2.

The protein resides in the nucleus. It is found in the cytoplasm. The protein localises to the cytosol. Histone chaperone that facilitates histone deposition and histone exchange and removal during nucleosome assembly and disassembly. Cooperates with chromatin assembly factor 1 (CAF-1) to promote replication-dependent chromatin assembly. Also involved in the nuclear import of the histone H3-H4 dimer together with importin-4 (IPO4): specifically recognizes and binds newly synthesized histones with the monomethylation of H3 'Lys-9' (H3K9me1) and diacetylation at 'Lys-5' and 'Lys-12' of H4 (H4K5ac and H4K12ac) marks in the cytosol. Does not participate in replication-independent nucleosome deposition which is mediated by ASF1A and HIRA. Required for gonad development. This Bos taurus (Bovine) protein is Histone chaperone ASF1B (ASF1B).